Consider the following 898-residue polypeptide: MLRVALLLLPGLPLAGVGATEEPTQEPGPLGEPPGLALFRWQWHEVEAPYLVALWILVASLAKIVFHLSRKVTSLVPESCLLILLGLALGGIVLAVAKKAEYQLEPGTFFLFLLPPIVLDSGYFMPSRLFFDNLGAILTYAVVGTLWNAFTTGVALWGLQQAGLVAPRVQAGLLDFLLFGSLISAVDPVAVLAVFEEVHVNETLFIIVFGESLLNDAVTVVLYKVCNSFVEMGSANVQATDYLKGVASLFVVSLGGAAVGLVFAFLLALTTRFTKRVRIIEPLLVFLLAYAAYLTAEMASLSAILAVTMCGLGCKKYVEANISHKSRTAVKYTMKTLASSAETVIFMLLGISAVDSSKWAWDSGLVLGTLFFILFFRALGVVLQTWVLNQFRLVPLDKIDQVVMSYGGLRGAVAFALVILLDRTKVPAKDYFVATTIVVVFFTVIVQGLTIKPLVKWLRVKRSDYHKPTLNQELHEHTFDHILAAVEDVVGHHGYHYWRDRWEQFDKKYLSQLLMRRSAYRIRDQIWDVYYRLNIRDAISFVDQGGHVLSSAGLTLPSMPSRNSVAETSVTNLLRESGSGACLDLQVIDTVRSGRDREDAVMHHLLCGGLYKPRRRYKASCSRHFISEDAQERQDKEVFQQNMKRRLESFKSTKHNICFTKSKPRPRKTGHKKKDGVANPEATNGKPPRDLGFQDTAAVILTVESEEEEESESSETEKEDDEGIIFVARATSEVLQEGKVSGSLEVCPSPRIIPPSPTCAEKELPWKSGQGDLAVYVSSETTKIVPVDMQTGWNQSISSLESLASPPCTQPPTLTRLPPHPLVPEEPQVPLDLSSDPRSSFAFPPSLAKAGRSRSESSADIPQQQELQPLMGHKDHTHLSPGPANSHWCIQFNRGGRL.

Residues M1 to R3 are Cytoplasmic-facing. The chain crosses the membrane as a helical span at residues V4–T24. Topologically, residues Q25 to E47 are extracellular. The chain crosses the membrane as a helical span at residues A48–L68. At S69 to L75 the chain is on the cytoplasmic side. The chain crosses the membrane as a helical span at residues V76–V96. The Extracellular portion of the chain corresponds to A97–A136. Residues I137–W157 form a helical membrane-spanning segment. At G158 to D175 the chain is on the cytoplasmic side. Residues F176–E196 traverse the membrane as a helical segment. At E197 to E202 the chain is on the extracellular side. An N-linked (GlcNAc...) asparagine glycan is attached at N201. The helical transmembrane segment at T203–Y223 threads the bilayer. At K224–S248 the chain is on the cytoplasmic side. A helical transmembrane segment spans residues L249–L269. The Extracellular portion of the chain corresponds to T270 to R278. A helical transmembrane segment spans residues I279 to A299. Topologically, residues S300 to T333 are cytoplasmic. Residues M334–V354 form a helical membrane-spanning segment. At D355 to D362 the chain is on the extracellular side. The chain crosses the membrane as a helical span at residues S363–L383. The Cytoplasmic segment spans residues Q384–D400. The helical transmembrane segment at Q401–L421 threads the bilayer. Over D422–D430 the chain is Extracellular. The helical transmembrane segment at Y431 to I451 threads the bilayer. Residues K452–L898 lie on the Cytoplasmic side of the membrane. 2 disordered regions span residues T660–G692 and E801–W888. The span at S662–K674 shows a compositional bias: basic residues. Positions E856 to L867 are enriched in polar residues.

It belongs to the monovalent cation:proton antiporter 1 (CPA1) transporter (TC 2.A.36) family. Interacts with CHP1 and CHP2. Interacts with ARRB2; facilitates the endocytosis of SLC9A5 from the plasma membrane. Interacts with RACK1; this interaction positively regulates SLC9A5 activity and promotes SLC9A5 localization to focal adhesions. Interacts with SCAMP2; this interaction regulates SLC9A5 cell-surface targeting and SLC9A5 activity. In terms of processing, phosphorylated by PRKAA2; promotes its accumulation at the cell surface. Phosphorylated by CSNK2A1 in a manner favoring its beta-arrestin binding and endocytosis. In terms of tissue distribution, highly expressed in brain. Strongly expressed in the dentate gyrus.

Its subcellular location is the cell membrane. The protein localises to the recycling endosome membrane. It is found in the cell projection. It localises to the dendritic spine membrane. The protein resides in the synaptic cell membrane. Its subcellular location is the cell junction. The protein localises to the focal adhesion. It catalyses the reaction Na(+)(in) + H(+)(out) = Na(+)(out) + H(+)(in). Plasma membrane Na(+)/H(+) antiporter. Mediates the electroneutral exchange of intracellular H(+) ions for extracellular Na(+) in 1:1 stoichiometry. Responsible for regulating intracellular pH homeostasis, in particular in neural tissues. Acts as a negative regulator of dendritic spine growth. Plays a role in postsynaptic remodeling and signaling. Can also contribute to organellar pH regulation, with consequences for receptor tyrosine kinase trafficking. In Rattus norvegicus (Rat), this protein is Sodium/hydrogen exchanger 5 (Slc9a5).